Reading from the N-terminus, the 67-residue chain is Prokaryotic ubiquitin-like protein Pup (67 aa).

Residues Met1 to Thr26 are disordered. Positions Glu23 to Phe61 are ARC ATPase binding. Residues Glu27–Glu55 are a coiled coil. Residue Glu67 forms an Isoglutamyl lysine isopeptide (Glu-Lys) (interchain with K-? in acceptor proteins) linkage.

Belongs to the prokaryotic ubiquitin-like protein family. Strongly interacts with the proteasome-associated ATPase ARC through a hydrophobic interface; the interacting region of Pup lies in its C-terminal half. There is one Pup binding site per ARC hexamer ring.

Its pathway is protein degradation; proteasomal Pup-dependent pathway. Protein modifier that is covalently attached to lysine residues of substrate proteins, thereby targeting them for proteasomal degradation. The tagging system is termed pupylation. This is Prokaryotic ubiquitin-like protein Pup from Thermobifida fusca (strain YX).